The following is a 250-amino-acid chain: 3-deoxy-manno-octulosonate cytidylyltransferase (250 aa).

It belongs to the KdsB family.

It is found in the cytoplasm. The catalysed reaction is 3-deoxy-alpha-D-manno-oct-2-ulosonate + CTP = CMP-3-deoxy-beta-D-manno-octulosonate + diphosphate. The protein operates within nucleotide-sugar biosynthesis; CMP-3-deoxy-D-manno-octulosonate biosynthesis; CMP-3-deoxy-D-manno-octulosonate from 3-deoxy-D-manno-octulosonate and CTP: step 1/1. Its pathway is bacterial outer membrane biogenesis; lipopolysaccharide biosynthesis. In terms of biological role, activates KDO (a required 8-carbon sugar) for incorporation into bacterial lipopolysaccharide in Gram-negative bacteria. In Syntrophotalea carbinolica (strain DSM 2380 / NBRC 103641 / GraBd1) (Pelobacter carbinolicus), this protein is 3-deoxy-manno-octulosonate cytidylyltransferase.